Reading from the N-terminus, the 1070-residue chain is DNA-directed RNA polymerase subunit beta (1070 aa).

The protein belongs to the RNA polymerase beta chain family. As to quaternary structure, in plastids the minimal PEP RNA polymerase catalytic core is composed of four subunits: alpha, beta, beta', and beta''. When a (nuclear-encoded) sigma factor is associated with the core the holoenzyme is formed, which can initiate transcription.

The protein localises to the plastid. The catalysed reaction is RNA(n) + a ribonucleoside 5'-triphosphate = RNA(n+1) + diphosphate. Functionally, DNA-dependent RNA polymerase catalyzes the transcription of DNA into RNA using the four ribonucleoside triphosphates as substrates. The polypeptide is DNA-directed RNA polymerase subunit beta (rpoB) (Cuscuta reflexa (Southern Asian dodder)).